A 407-amino-acid chain; its full sequence is Argininosuccinate synthase (407 aa).

ATP contacts are provided by residues 13-21 and A40; that span reads AYSGGLDTS. Y91 and S96 together coordinate L-citrulline. ATP is bound at residue G121. L-aspartate contacts are provided by T123, N127, and D128. N127 is an L-citrulline binding site. L-citrulline-binding residues include R131, S182, S191, E267, and Y279.

This sequence belongs to the argininosuccinate synthase family. Type 1 subfamily. Homotetramer.

The protein resides in the cytoplasm. It carries out the reaction L-citrulline + L-aspartate + ATP = 2-(N(omega)-L-arginino)succinate + AMP + diphosphate + H(+). Its pathway is amino-acid biosynthesis; L-arginine biosynthesis; L-arginine from L-ornithine and carbamoyl phosphate: step 2/3. This is Argininosuccinate synthase from Mesorhizobium japonicum (strain LMG 29417 / CECT 9101 / MAFF 303099) (Mesorhizobium loti (strain MAFF 303099)).